We begin with the raw amino-acid sequence, 306 residues long: Pantothenate kinase (306 aa).

91 to 98 contacts ATP; the sequence is GSVAVGKS.

The protein belongs to the prokaryotic pantothenate kinase family.

It is found in the cytoplasm. It carries out the reaction (R)-pantothenate + ATP = (R)-4'-phosphopantothenate + ADP + H(+). The protein operates within cofactor biosynthesis; coenzyme A biosynthesis; CoA from (R)-pantothenate: step 1/5. This Streptococcus pyogenes serotype M5 (strain Manfredo) protein is Pantothenate kinase.